We begin with the raw amino-acid sequence, 258 residues long: Global transcriptional regulator CodY (258 aa).

Positions 1 to 156 are GAF domain; that stretch reads MSTLLDKTRK…SATIVGLEIL (156 aa). Positions 204-223 form a DNA-binding region, H-T-H motif; the sequence is ASKIADKVGITRSVIVNALR.

Belongs to the CodY family.

It is found in the cytoplasm. DNA-binding global transcriptional regulator which is involved in the adaptive response to starvation and acts by directly or indirectly controlling the expression of numerous genes in response to nutrient availability. During rapid exponential growth, CodY is highly active and represses genes whose products allow adaptation to nutrient depletion. This is Global transcriptional regulator CodY from Clostridium kluyveri (strain NBRC 12016).